We begin with the raw amino-acid sequence, 312 residues long: Type II methyltransferase M.NgoMIV (312 aa).

The SAM-dependent MTase C5-type domain occupies 3-311; the sequence is FTSLEICAGA…RQIIKALKKE (309 aa). Cys74 is an active-site residue.

This sequence belongs to the class I-like SAM-binding methyltransferase superfamily. C5-methyltransferase family.

The catalysed reaction is a 2'-deoxycytidine in DNA + S-adenosyl-L-methionine = a 5-methyl-2'-deoxycytidine in DNA + S-adenosyl-L-homocysteine + H(+). Its function is as follows. A methylase, recognizes the double-stranded sequence 5'-GCCGGC-3', methylates C-2 on both strands, and protects the DNA from cleavage by the NgoMIV endonuclease. The protein is Type II methyltransferase M.NgoMIV (ngoMIVM) of Neisseria gonorrhoeae.